A 537-amino-acid chain; its full sequence is Serendipity locus protein alpha (537 aa).

It localises to the cytoplasm. The protein resides in the cell membrane. Its function is as follows. Required for the cellularization of the syncytial blastoderm embryo. Involved in the localization of the actin filaments just prior to and during plasma membrane invagination. Sry-alpha together with nullo and bnk may provide auxiliary functions, by acting both to stabilize a large and dynamic microfilament structure and regulate its functions. This is Serendipity locus protein alpha (Sry-alpha) from Drosophila virilis (Fruit fly).